A 381-amino-acid chain; its full sequence is 8-amino-7-oxononanoate synthase (381 aa).

Substrate is bound at residue R27. Position 105–106 (105–106 (GY)) interacts with pyridoxal 5'-phosphate. A substrate-binding site is contributed by H130. Pyridoxal 5'-phosphate contacts are provided by residues S176, 201-204 (DEAH), and 232-235 (TLSK). K235 bears the N6-(pyridoxal phosphate)lysine mark. T345 lines the substrate pocket.

The protein belongs to the class-II pyridoxal-phosphate-dependent aminotransferase family. BioF subfamily. As to quaternary structure, homodimer. The cofactor is pyridoxal 5'-phosphate.

It catalyses the reaction 6-carboxyhexanoyl-[ACP] + L-alanine + H(+) = (8S)-8-amino-7-oxononanoate + holo-[ACP] + CO2. It functions in the pathway cofactor biosynthesis; biotin biosynthesis. Functionally, catalyzes the decarboxylative condensation of pimeloyl-[acyl-carrier protein] and L-alanine to produce 8-amino-7-oxononanoate (AON), [acyl-carrier protein], and carbon dioxide. In Mycobacterium avium (strain 104), this protein is 8-amino-7-oxononanoate synthase.